We begin with the raw amino-acid sequence, 260 residues long: 3'-5' ssDNA/RNA exonuclease TatD (260 aa).

Residues glutamate 92, histidine 128, and histidine 153 each coordinate a divalent metal cation.

Belongs to the metallo-dependent hydrolases superfamily. TatD-type hydrolase family. TatD subfamily. In terms of assembly, monomer. Requires Mg(2+) as cofactor.

It localises to the cytoplasm. 3'-5' exonuclease that prefers single-stranded DNA and RNA. May play a role in the H(2)O(2)-induced DNA damage repair. This is 3'-5' ssDNA/RNA exonuclease TatD from Pantoea sp. (strain At-9b).